Reading from the N-terminus, the 519-residue chain is ATP synthase subunit beta, mitochondrial (519 aa).

The N-terminal 21 residues, M1–A21, are a transit peptide targeting the mitochondrion. ATP is bound by residues G184–V191 and R216.

The protein belongs to the ATPase alpha/beta chains family. F-type ATPases have 2 components, F(1) - the catalytic core - and F(o) - the membrane proton channel. F(1) has five subunits: alpha(3), beta(3), gamma(1), delta(1), epsilon(1), plus the additional subunit P18 (Tb427.05.1710) that is not present in F(1)F(o) ATP synthase from metazoa. Subunit P18 (Tb927.5.1710) interacts with the alpha subunit with a 1:1 stoichiometry; the interaction is direct. Subunit gamma is part of the central stalk. F(o) has three main subunits: a, b and c. The trypanosomal ATPase complex contains additional subunits that are not present in the F(1)F(o) ATP synthase from metazoa.

The protein resides in the mitochondrion. It is found in the mitochondrion inner membrane. The enzyme catalyses ATP + H2O + 4 H(+)(in) = ADP + phosphate + 5 H(+)(out). In terms of biological role, mitochondrial membrane ATP synthase (F(1)F(o) ATP synthase) produces ATP from ADP in the presence of a proton gradient across the membrane which is generated by electron transport complexes of the respiratory chain. F-type ATPases consist of two structural domains, F(1) - containing the extramembraneous catalytic core, and F(o) - containing the membrane proton channel, linked together by a central stalk and a peripheral stalk. During catalysis, ATP synthesis in the catalytic domain of F(1) is coupled via a rotary mechanism of the central stalk subunits to proton translocation. Subunits alpha and beta form the catalytic core in F(1). Rotation of the central stalk against the surrounding alpha(3)beta(3) subunits leads to hydrolysis of ATP in three separate catalytic sites on the beta subunits. Contrary to the procyclic, insect form that requires F(1)F(o) ATP synthase for ATP synthesis, the bloodstream form relies on ATP hydrolysis by F(1)F(o) ATP synthase to maintain its mitochondrial membrane potential. In Trypanosoma brucei brucei, this protein is ATP synthase subunit beta, mitochondrial.